Here is a 113-residue protein sequence, read N- to C-terminus: Ribonuclease P protein component (113 aa).

It belongs to the RnpA family. Consists of a catalytic RNA component (M1 or rnpB) and a protein subunit.

The catalysed reaction is Endonucleolytic cleavage of RNA, removing 5'-extranucleotides from tRNA precursor.. In terms of biological role, RNaseP catalyzes the removal of the 5'-leader sequence from pre-tRNA to produce the mature 5'-terminus. It can also cleave other RNA substrates such as 4.5S RNA. The protein component plays an auxiliary but essential role in vivo by binding to the 5'-leader sequence and broadening the substrate specificity of the ribozyme. This Clavibacter michiganensis subsp. michiganensis (strain NCPPB 382) protein is Ribonuclease P protein component.